The sequence spans 312 residues: Protoheme IX farnesyltransferase (312 aa).

Transmembrane regions (helical) follow at residues 31–51 (LLMK…GLFI), 58–78 (PLLS…AGAI), 107–127 (TALT…AICV), 130–150 (ISSI…TMWL), 157–177 (NIVI…SAVT), 184–204 (CLML…TLSL), 229–249 (YSIL…YFTD), 250–270 (IAGL…LCYA), and 286–306 (FKYS…EHCI).

Belongs to the UbiA prenyltransferase family. Protoheme IX farnesyltransferase subfamily.

The protein resides in the cell inner membrane. The enzyme catalyses heme b + (2E,6E)-farnesyl diphosphate + H2O = Fe(II)-heme o + diphosphate. It functions in the pathway porphyrin-containing compound metabolism; heme O biosynthesis; heme O from protoheme: step 1/1. Functionally, converts heme B (protoheme IX) to heme O by substitution of the vinyl group on carbon 2 of heme B porphyrin ring with a hydroxyethyl farnesyl side group. This Orientia tsutsugamushi (strain Ikeda) (Rickettsia tsutsugamushi) protein is Protoheme IX farnesyltransferase.